The primary structure comprises 811 residues: Zinc finger protein 839 (811 aa).

The C2H2-type zinc finger occupies 197–222; it reads FKCQTCEKSYIGKGGLARHFKLNPGH. Disordered regions lie at residues 329-349, 455-555, and 612-654; these read QRRA…RASP, PDNL…NGSV, and ALEH…AEAG. Basic and acidic residues predominate over residues 476–485; that stretch reads SSEKREREAA. Positions 501-510 are enriched in polar residues; that stretch reads SNDTTESLAA.

This chain is Zinc finger protein 839 (ZNF839), found in Homo sapiens (Human).